Here is a 175-residue protein sequence, read N- to C-terminus: Adenine phosphoribosyltransferase (175 aa).

Belongs to the purine/pyrimidine phosphoribosyltransferase family. Homodimer.

It is found in the cytoplasm. The enzyme catalyses AMP + diphosphate = 5-phospho-alpha-D-ribose 1-diphosphate + adenine. It functions in the pathway purine metabolism; AMP biosynthesis via salvage pathway; AMP from adenine: step 1/1. Its function is as follows. Catalyzes a salvage reaction resulting in the formation of AMP, that is energically less costly than de novo synthesis. This Francisella tularensis subsp. holarctica (strain FTNF002-00 / FTA) protein is Adenine phosphoribosyltransferase.